The primary structure comprises 389 residues: Sulfate adenylyltransferase (389 aa).

It belongs to the sulfate adenylyltransferase family.

It carries out the reaction sulfate + ATP + H(+) = adenosine 5'-phosphosulfate + diphosphate. It participates in sulfur metabolism; hydrogen sulfide biosynthesis; sulfite from sulfate: step 1/3. This chain is Sulfate adenylyltransferase, found in Microcystis aeruginosa (strain NIES-843 / IAM M-2473).